The chain runs to 428 residues: Serine--tRNA ligase (428 aa).

231-233 (TAE) is a binding site for L-serine. 262 to 264 (RAE) is a binding site for ATP. Residue E285 coordinates L-serine. An ATP-binding site is contributed by 349-352 (EISS). An L-serine-binding site is contributed by S385.

Belongs to the class-II aminoacyl-tRNA synthetase family. Type-1 seryl-tRNA synthetase subfamily. In terms of assembly, homodimer. The tRNA molecule binds across the dimer.

It localises to the cytoplasm. The enzyme catalyses tRNA(Ser) + L-serine + ATP = L-seryl-tRNA(Ser) + AMP + diphosphate + H(+). It catalyses the reaction tRNA(Sec) + L-serine + ATP = L-seryl-tRNA(Sec) + AMP + diphosphate + H(+). It functions in the pathway aminoacyl-tRNA biosynthesis; selenocysteinyl-tRNA(Sec) biosynthesis; L-seryl-tRNA(Sec) from L-serine and tRNA(Sec): step 1/1. Its function is as follows. Catalyzes the attachment of serine to tRNA(Ser). Is also able to aminoacylate tRNA(Sec) with serine, to form the misacylated tRNA L-seryl-tRNA(Sec), which will be further converted into selenocysteinyl-tRNA(Sec). The chain is Serine--tRNA ligase from Methylorubrum populi (strain ATCC BAA-705 / NCIMB 13946 / BJ001) (Methylobacterium populi).